We begin with the raw amino-acid sequence, 341 residues long: L-threonine 3-dehydrogenase (341 aa).

Cysteine 38 is a Zn(2+) binding site. Active-site charge relay system residues include threonine 40 and histidine 43. Residues histidine 63, glutamate 64, cysteine 93, cysteine 96, cysteine 99, and cysteine 107 each coordinate Zn(2+). NAD(+)-binding positions include isoleucine 175, aspartate 195, arginine 200, 262-264 (LGI), and 286-287 (IY).

Belongs to the zinc-containing alcohol dehydrogenase family. As to quaternary structure, homotetramer. Zn(2+) is required as a cofactor.

The protein localises to the cytoplasm. It catalyses the reaction L-threonine + NAD(+) = (2S)-2-amino-3-oxobutanoate + NADH + H(+). It functions in the pathway amino-acid degradation; L-threonine degradation via oxydo-reductase pathway; glycine from L-threonine: step 1/2. Catalyzes the NAD(+)-dependent oxidation of L-threonine to 2-amino-3-ketobutyrate. The polypeptide is L-threonine 3-dehydrogenase (Shewanella frigidimarina (strain NCIMB 400)).